Reading from the N-terminus, the 908-residue chain is Protein translocase subunit SecA (908 aa).

ATP is bound by residues glutamine 87, 105-109 (GEGKT), and aspartate 512. The interval 865 to 908 (GGDDGSDEMMAHTPMIRDGDKVGRNDPCPCGSGRKYKQCHGKLS) is disordered. Positions 879–888 (MIRDGDKVGR) are enriched in basic and acidic residues. 4 residues coordinate Zn(2+): cysteine 892, cysteine 894, cysteine 903, and histidine 904. Over residues 898 to 908 (RKYKQCHGKLS) the composition is skewed to basic residues.

This sequence belongs to the SecA family. As to quaternary structure, monomer and homodimer. Part of the essential Sec protein translocation apparatus which comprises SecA, SecYEG and auxiliary proteins SecDF-YajC and YidC. The cofactor is Zn(2+).

The protein resides in the cell inner membrane. The protein localises to the cytoplasm. It catalyses the reaction ATP + H2O + cellular proteinSide 1 = ADP + phosphate + cellular proteinSide 2.. Part of the Sec protein translocase complex. Interacts with the SecYEG preprotein conducting channel. Has a central role in coupling the hydrolysis of ATP to the transfer of proteins into and across the cell membrane, serving both as a receptor for the preprotein-SecB complex and as an ATP-driven molecular motor driving the stepwise translocation of polypeptide chains across the membrane. The polypeptide is Protein translocase subunit SecA (Shewanella sp. (strain MR-7)).